The chain runs to 214 residues: Thymidylate kinase (214 aa).

Residue 10–17 participates in ATP binding; sequence GGEGAGKS.

Belongs to the thymidylate kinase family.

The catalysed reaction is dTMP + ATP = dTDP + ADP. Its function is as follows. Phosphorylation of dTMP to form dTDP in both de novo and salvage pathways of dTTP synthesis. This is Thymidylate kinase from Brucella abortus (strain S19).